The primary structure comprises 474 residues: Tryptophan biosynthesis protein TrpCF (474 aa).

The indole-3-glycerol phosphate synthase stretch occupies residues 1–262 (MTSNNLPTVL…LAARELVYGP (262 aa)). An N-(5'-phosphoribosyl)anthranilate isomerase region spans residues 263-474 (NKVCGLTSPS…IFATISTFHY (212 aa)).

It in the N-terminal section; belongs to the TrpC family. The protein in the C-terminal section; belongs to the TrpF family. In terms of assembly, monomer.

It carries out the reaction N-(5-phospho-beta-D-ribosyl)anthranilate = 1-(2-carboxyphenylamino)-1-deoxy-D-ribulose 5-phosphate. The catalysed reaction is 1-(2-carboxyphenylamino)-1-deoxy-D-ribulose 5-phosphate + H(+) = (1S,2R)-1-C-(indol-3-yl)glycerol 3-phosphate + CO2 + H2O. It participates in amino-acid biosynthesis; L-tryptophan biosynthesis; L-tryptophan from chorismate: step 3/5. It functions in the pathway amino-acid biosynthesis; L-tryptophan biosynthesis; L-tryptophan from chorismate: step 4/5. Its function is as follows. Bifunctional enzyme that catalyzes two sequential steps of tryptophan biosynthetic pathway. The first reaction is catalyzed by the isomerase, coded by the TrpF domain; the second reaction is catalyzed by the synthase, coded by the TrpC domain. The sequence is that of Tryptophan biosynthesis protein TrpCF (trpC) from Corynebacterium glutamicum (strain ATCC 13032 / DSM 20300 / JCM 1318 / BCRC 11384 / CCUG 27702 / LMG 3730 / NBRC 12168 / NCIMB 10025 / NRRL B-2784 / 534).